The following is a 237-amino-acid chain: MIYAQILAGGKGTRMGNVSMPKQFLPLNGKPIIVHTVEKFILNTRFDKILISSPKEWMNHAEDNIKKYISDDRIVVIEGGEDRNETIMNGIRFVEKTYGLTDDDIIVTHDAVRPFLTHRIIEENIDAALETGAVDTVIEALDTIVESSNHEVITDIPVRDHMYQGQTPQSFNMKKVFNHYQNLTPEKKQILTDACKICLLAGDDVKLVKGEIFNIKITTPYDLKVANAIIQERIAND.

CTP-binding positions include 7–10 (LAGG) and 80–86 (GEDRNET).

The protein belongs to the IspD/TarI cytidylyltransferase family. TarI subfamily.

It catalyses the reaction D-ribitol 5-phosphate + CTP + H(+) = CDP-L-ribitol + diphosphate. Its pathway is cell wall biogenesis; poly(ribitol phosphate) teichoic acid biosynthesis. Functionally, catalyzes the transfer of the cytidylyl group of CTP to D-ribitol 5-phosphate. The chain is Ribitol-5-phosphate cytidylyltransferase from Listeria monocytogenes serotype 4b (strain F2365).